A 414-amino-acid chain; its full sequence is Solute carrier family 25 member 46-B (414 aa).

Positions 1-13 (MQPRRPDRFDGLE) are enriched in basic and acidic residues. A disordered region spans residues 1–89 (MQPRRPDRFD…AFGEENSGSS (89 aa)). A compositionally biased stretch (polar residues) spans 29 to 50 (YQSSFPARSLSSSGDLSQQWVT). Residues 92-183 (QVNRFAGFGI…GMLSEFTHLP (92 aa)) form a Solcar 1 repeat. The next 6 membrane-spanning stretches (helical) occupy residues 99 to 119 (FGIG…CIVL), 159 to 179 (MGST…LSEF), 198 to 218 (HLLL…ASLI), 254 to 274 (LLPL…HYII), 310 to 330 (FPEL…LYPL), and 379 to 399 (LGFY…AIVL). Residues 307 to 412 (EDYFPELLAN…KIIYSSVVQT (106 aa)) form a Solcar 2 repeat.

The protein belongs to the mitochondrial carrier (TC 2.A.29) family.

It is found in the mitochondrion outer membrane. Its function is as follows. May play a role in mitochondrial dynamics by controlling mitochondrial membrane fission. This Xenopus laevis (African clawed frog) protein is Solute carrier family 25 member 46-B (slc25a46-b).